A 423-amino-acid chain; its full sequence is Gamma-glutamyl phosphate reductase (423 aa).

Belongs to the gamma-glutamyl phosphate reductase family.

The protein resides in the cytoplasm. It carries out the reaction L-glutamate 5-semialdehyde + phosphate + NADP(+) = L-glutamyl 5-phosphate + NADPH + H(+). It functions in the pathway amino-acid biosynthesis; L-proline biosynthesis; L-glutamate 5-semialdehyde from L-glutamate: step 2/2. Its function is as follows. Catalyzes the NADPH-dependent reduction of L-glutamate 5-phosphate into L-glutamate 5-semialdehyde and phosphate. The product spontaneously undergoes cyclization to form 1-pyrroline-5-carboxylate. The polypeptide is Gamma-glutamyl phosphate reductase (Paraburkholderia phymatum (strain DSM 17167 / CIP 108236 / LMG 21445 / STM815) (Burkholderia phymatum)).